The following is a 479-amino-acid chain: CBL-interacting serine/threonine-protein kinase 10 (479 aa).

Residues 12–266 (YDVGRLLGQG…IARIRESSWF (255 aa)) enclose the Protein kinase domain. Residues 18-26 (LGQGTFAKV) and lysine 41 each bind ATP. Aspartate 134 acts as the Proton acceptor in catalysis. Positions 152-181 (DFGLSALADCKRQDGLLHTTCGTPAYVAPE) are activation loop. A Phosphoserine modification is found at serine 156. Threonine 170 is subject to Phosphothreonine. Residues 286 to 323 (SVEAGTAGTNENGAGPSENGAGPSENGDRVTEENHTDE) form a disordered region. Residues 288–300 (EAGTAGTNENGAG) show a composition bias toward low complexity. Over residues 311–323 (NGDRVTEENHTDE) the composition is skewed to basic and acidic residues. The region spanning 322 to 346 (DEPTNLNAFDLIALSAGFDLAGLFG) is the NAF domain. The segment at 350 to 379 (KRESRFTSQKPASVIISKLEEVAQRLKLSI) is PPI. Positions 456–479 (SQQETEYQQQQQQEQQEQEEPLKF) are disordered. The segment covering 457–470 (QQETEYQQQQQQEQ) has biased composition (low complexity).

Belongs to the protein kinase superfamily. CAMK Ser/Thr protein kinase family. SNF1 subfamily. In terms of assembly, interacts with CBL4/SOS3. Requires Mn(2+) as cofactor. Mostly expressed in roots.

It catalyses the reaction L-seryl-[protein] + ATP = O-phospho-L-seryl-[protein] + ADP + H(+). The enzyme catalyses L-threonyl-[protein] + ATP = O-phospho-L-threonyl-[protein] + ADP + H(+). CIPK serine-threonine protein kinases interact with CBL proteins. Binding of a CBL protein to the regulatory NAF domain of CIPK protein lead to the activation of the kinase in a calcium-dependent manner. The protein is CBL-interacting serine/threonine-protein kinase 10 (CIPK10) of Arabidopsis thaliana (Mouse-ear cress).